The following is an 84-amino-acid chain: Large ribosomal subunit protein bL27 (84 aa).

Residues 1–22 (MAHKKAGGSTRNGRDSESKRLG) form a disordered region.

Belongs to the bacterial ribosomal protein bL27 family.

The sequence is that of Large ribosomal subunit protein bL27 from Shewanella loihica (strain ATCC BAA-1088 / PV-4).